The chain runs to 347 residues: Phosphoribosylformylglycinamidine cyclo-ligase (347 aa).

It belongs to the AIR synthase family.

The protein localises to the cytoplasm. It catalyses the reaction 2-formamido-N(1)-(5-O-phospho-beta-D-ribosyl)acetamidine + ATP = 5-amino-1-(5-phospho-beta-D-ribosyl)imidazole + ADP + phosphate + H(+). It functions in the pathway purine metabolism; IMP biosynthesis via de novo pathway; 5-amino-1-(5-phospho-D-ribosyl)imidazole from N(2)-formyl-N(1)-(5-phospho-D-ribosyl)glycinamide: step 2/2. This chain is Phosphoribosylformylglycinamidine cyclo-ligase, found in Alkalilimnicola ehrlichii (strain ATCC BAA-1101 / DSM 17681 / MLHE-1).